Reading from the N-terminus, the 688-residue chain is Complement C1s subcomponent (688 aa).

The first 15 residues, M1–A15, serve as a signal peptide directing secretion. The CUB 1 domain occupies E16 to V130. Ca(2+) is bound by residues E60, D68, D113, D131, V132, and E134. An intrachain disulfide couples C65 to C83. An EGF-like; calcium-binding domain is found at D131–G172. Intrachain disulfides connect C135/C147, C143/C156, and C158/C171. Ca(2+) is bound by residues N149, F150, and G153. The residue at position 149 (N149) is a (3R)-3-hydroxyasparagine. Residue N174 is glycosylated (N-linked (GlcNAc...) asparagine). The cysteines at positions 175 and 202 are disulfide-linked. In terms of domain architecture, CUB 2 spans C175–D290. Ca(2+) is bound by residues E226, D236, D275, G278, and Q279. A disulfide bridge connects residues C234 and C251. 2 consecutive Sushi domains span residues I292–P356 and V357–P423. Cystine bridges form between C294–C341, C321–C354, C359–C403, C386–C421, C425–C549, C595–C618, and C627–C659. N-linked (GlcNAc...) asparagine glycosylation occurs at N406. A Peptidase S1 domain is found at I438–Q680. Residues H475 and D529 each act as charge relay system in the active site. The active-site Charge relay system is S631.

This sequence belongs to the peptidase S1 family. In terms of assembly, core component of the complement C1 complex, a calcium-dependent complex composed of 1 molecule of the C1Q subcomplex, 2 molecules of C1R and 2 molecules of C1S. The C1Q subcomplex is composed 18 subunits: 3 chains of C1QA, C1QB, and C1QC trimerize to form 6 collagen-like triple helices connected to six globular ligand-recognition modules. Post-translationally, cleaved and activated by C1R to generate Complement C1s subcomponent heavy and light chains. In terms of processing, the iron and 2-oxoglutarate dependent 3-hydroxylation of aspartate and asparagine is (R) stereospecific within EGF domains.

Its subcellular location is the secreted. It localises to the cell surface. The catalysed reaction is Cleavage of Arg-|-Ala bond in complement component C4 to form C4a and C4b, and Lys(or Arg)-|-Lys bond in complement component C2 to form C2a and C2b: the 'classical' pathway C3 convertase.. With respect to regulation, cleaved and activated by C1R. Immunoglobulin-binding promotes autoactivation of C1R, which results in the cleavage of the Arg-Ile bond in the catalytic domain. Inhibited by C1 inhibitor (SERPING1). In terms of biological role, component of the complement C1 complex, a multiprotein complex that initiates the classical pathway of the complement system, a cascade of proteins that leads to phagocytosis and breakdown of pathogens and signaling that strengthens the adaptive immune system. C1S is activated following association of the C1 complex with immunoglobulins (IgG or IgM) complexed with antigens to form antigen-antibody complexes on the surface of pathogens. C1S is cleaved and activated by C1R to generate C1s subcomponent heavy and light chains. C1s subcomponent light chain then cleaves and activates C2 and C4, the next components of the classical complement pathway. Its function is as follows. Serine protease component of the complement C1 complex, which catalyzes cleavage and activation of C2 and C4, the next components of the classical complement pathway. Also cleaves IGFBP5 and thereby inhibits the trophic effects of IGF1. This chain is Complement C1s subcomponent, found in Rattus norvegicus (Rat).